A 249-amino-acid chain; its full sequence is Orotidine 5'-phosphate decarboxylase (249 aa).

Substrate is bound by residues Asp18, Lys40, 67 to 76, Thr127, Arg188, Gln197, Gly217, and Arg218; that span reads DLKYHDIPNT. Lys69 serves as the catalytic Proton donor.

It belongs to the OMP decarboxylase family. Type 1 subfamily. As to quaternary structure, homodimer.

The enzyme catalyses orotidine 5'-phosphate + H(+) = UMP + CO2. It participates in pyrimidine metabolism; UMP biosynthesis via de novo pathway; UMP from orotate: step 2/2. Functionally, catalyzes the decarboxylation of orotidine 5'-monophosphate (OMP) to uridine 5'-monophosphate (UMP). This Baumannia cicadellinicola subsp. Homalodisca coagulata protein is Orotidine 5'-phosphate decarboxylase.